We begin with the raw amino-acid sequence, 342 residues long: Ribosomal RNA small subunit methyltransferase C (342 aa).

This sequence belongs to the methyltransferase superfamily. RsmC family. In terms of assembly, monomer.

Its subcellular location is the cytoplasm. It carries out the reaction guanosine(1207) in 16S rRNA + S-adenosyl-L-methionine = N(2)-methylguanosine(1207) in 16S rRNA + S-adenosyl-L-homocysteine + H(+). Specifically methylates the guanine in position 1207 of 16S rRNA in the 30S particle. This Salmonella gallinarum (strain 287/91 / NCTC 13346) protein is Ribosomal RNA small subunit methyltransferase C.